The sequence spans 70 residues: Cuticle protein 16 isoform b (70 aa).

This chain is Cuticle protein 16 isoform b, found in Limulus polyphemus (Atlantic horseshoe crab).